Reading from the N-terminus, the 217-residue chain is 3-oxo-tetronate 4-phosphate decarboxylase (217 aa).

Zn(2+)-binding residues include H93 and H95. Y120 serves as the catalytic Proton donor.

Belongs to the aldolase class II family. AraD/FucA subfamily. Requires Zn(2+) as cofactor.

The enzyme catalyses 3-dehydro-4-O-phospho-D-erythronate + H(+) = dihydroxyacetone phosphate + CO2. The catalysed reaction is 3-dehydro-4-O-phospho-L-erythronate + H(+) = dihydroxyacetone phosphate + CO2. Catalyzes the decarboxylation of 3-oxo-tetronate 4-phosphate to dihydroxyacetone phosphate (DHAP) and CO(2). The protein is 3-oxo-tetronate 4-phosphate decarboxylase of Cupriavidus necator (strain ATCC 17699 / DSM 428 / KCTC 22496 / NCIMB 10442 / H16 / Stanier 337) (Ralstonia eutropha).